A 259-amino-acid polypeptide reads, in one-letter code: UPF0246 protein RD1_0358 (259 aa).

This sequence belongs to the UPF0246 family.

The protein is UPF0246 protein RD1_0358 of Roseobacter denitrificans (strain ATCC 33942 / OCh 114) (Erythrobacter sp. (strain OCh 114)).